A 188-amino-acid chain; its full sequence is Adrenodoxin, mitochondrial (188 aa).

The N-terminal 64 residues, 1-64, are a transit peptide targeting the mitochondrion; the sequence is MAAAPGARLL…RPLSVSARAR (64 aa). Phosphoserine is present on Ser-67. In terms of domain architecture, 2Fe-2S ferredoxin-type spans 69-175; the sequence is DKVTVHFKNR…NMTVRVPEAV (107 aa). Lys-70 carries the post-translational modification N6-acetyllysine; alternate. An N6-succinyllysine; alternate modification is found at Lys-70. [2Fe-2S] cluster is bound by residues Cys-110, Cys-116, Cys-119, and Cys-156. The residue at position 162 (Lys-162) is an N6-succinyllysine. At Ser-181 the chain carries Phosphoserine.

It belongs to the adrenodoxin/putidaredoxin family. As to quaternary structure, interacts with CYP11A1. Requires [2Fe-2S] cluster as cofactor. As to expression, found in all tissues, most abundant in adrenals, ovaries and testes.

It localises to the mitochondrion matrix. Essential for the synthesis of various steroid hormones. Participates in the reduction of mitochondrial cytochrome P450 for steroidogenesis. Transfers electrons from adrenodoxin reductase to CYP11A1, a cytochrome P450 that catalyzes cholesterol side-chain cleavage. Does not form a ternary complex with adrenodoxin reductase and CYP11A1 but shuttles between the two enzymes to transfer electrons. The chain is Adrenodoxin, mitochondrial (Fdx1) from Rattus norvegicus (Rat).